A 1368-amino-acid polypeptide reads, in one-letter code: Inactive tyrosine-protein kinase PRAG1 (1368 aa).

The interval 200–236 (CLKGPRPCTSPQPLRESLPSEDDSDQRCSPSGDSEGG) is disordered. Phosphotyrosine; by CSK is present on Tyr238. The disordered stretch occupies residues 297-330 (STANPPHLGPKKPSLNSEAASSSDGLSCGSSRSG). Over residues 317 to 330 (SSSDGLSCGSSRSG) the composition is skewed to low complexity. Tyr343 and Tyr391 each carry phosphotyrosine; by CSK. Disordered regions lie at residues 392 to 443 (AESA…PNAA), 499 to 605 (LSSR…GAWS), and 636 to 792 (HSNS…KKIV). The span at 414–434 (VSSGQVWTGDTWSQKTPSGWS) shows a compositional bias: polar residues. Basic and acidic residues predominate over residues 502 to 518 (RESHPHNMTENSSKEKP). 2 stretches are compositionally biased toward low complexity: residues 522–535 (PKLSKSSPGGSPVS) and 550–563 (SGSSVGSQPSSRVP). Composition is skewed to polar residues over residues 564–574 (TNLTSSCQTNG) and 652–666 (SGQNGKTNSGMSKSA). 2 positions are modified to phosphoserine: Ser667 and Ser716. Composition is skewed to polar residues over residues 707–717 (VSQSSAESLSP) and 725–741 (SFTTGSTDSLASDSRTC). A phosphoserine mark is found at Ser753 and Ser797. 2 disordered regions span residues 799–818 (PDGFFWTQGSPKPRTASPKL) and 873–901 (NSKGGCGSPNLQGRAATSTSSSQLSVSSQ). Low complexity predominate over residues 887-901 (AATSTSSSQLSVSSQ). The segment at 906–949 (SSQLQLHSLLSSISSKEGTYAKLGGLYTQSLARLVTKCEDLFMG) is required for homodimerization. In terms of domain architecture, Protein kinase spans 940 to 1291 (VTKCEDLFMG…EAKRVLQCLL (352 aa)). Polar residues predominate over residues 1134–1144 (SSPGPSANPSV). Positions 1134–1166 (SSPGPSANPSVPTTTSRCPSAAPAATTACQGGP) are disordered. Positions 1145-1162 (PTTTSRCPSAAPAATTAC) are enriched in low complexity. The tract at residues 1293-1368 (GPRRELVEQP…LQSLKLLQLL (76 aa)) is required for homodimerization.

It belongs to the protein kinase superfamily. In terms of assembly, homodimer. Dimerization leads to the catalytic activation of CSK. Interacts (via C-terminus) with RND2. Interacts with CSK (via SH2 domain) in a Tyr-391 phosphorylation-dependent manner; this interaction potentiates kinase activity of CSK. Interacts with NOTCH1 intracellular domain (N1ICD). Forms a complex with N1ICD and MAML1, in a MAML1-dependent manner. Phosphorylated by CSK on Tyr-238, Tyr-343, and Tyr-391; Tyr-391 is a primary site of phosphorylation. Highly-expressed in brain, including cortical and hippocampal pyramidal neurons, as well as in kidney, spleen, colon and small intestine.

The protein resides in the cytoplasm. It is found in the nucleus. The protein localises to the cell junction. It localises to the focal adhesion. Functionally, catalytically inactive protein kinase that acts as a scaffold protein. Functions as an effector of the small GTPase RND2, which stimulates RhoA activity and inhibits NGF-induced neurite outgrowth. Promotes Src family kinase (SFK) signallig by regulating the subcellular localization of CSK, a negative regulator of these kinases, leading to the regulation of cell morphology and motility by a CSK-dependent mechanism. Acts as a critical coactivator of Notch signaling. The protein is Inactive tyrosine-protein kinase PRAG1 of Rattus norvegicus (Rat).